The following is a 152-amino-acid chain: MTDKPFWQTKNLNQLTRSEWESLCDGCGQCCLHKLQDEDTDEIYWTSVACTLLNPETCQCRDYPNRKKTVPDCVFLTPEIVDEVDWLPVTCAYRLVAEGSDLYWWHPLVSGSPETVHEAGISVRGKVTAFDHDMQDDDDYLDHMVTPDKIAR.

The protein belongs to the UPF0260 family.

The polypeptide is UPF0260 protein BR1477/BS1330_I1471 (Brucella suis biovar 1 (strain 1330)).